The chain runs to 177 residues: Ribosome rescue factor SmrB (177 aa).

One can recognise a Smr domain in the interval leucine 92–glutamate 167.

Belongs to the SmrB family. In terms of assembly, associates with collided ribosomes, but not with correctly translating polysomes.

In terms of biological role, acts as a ribosome collision sensor. Detects stalled/collided disomes (pairs of ribosomes where the leading ribosome is stalled and a second ribosome has collided with it) and endonucleolytically cleaves mRNA at the 5' boundary of the stalled ribosome. Stalled/collided disomes form a new interface (primarily via the 30S subunits) that binds SmrB. Cleaved mRNA becomes available for tmRNA ligation, leading to ribosomal subunit dissociation and rescue of stalled ribosomes. This chain is Ribosome rescue factor SmrB, found in Haemophilus ducreyi (strain 35000HP / ATCC 700724).